The chain runs to 396 residues: Elongation factor Tu (396 aa).

The tr-type G domain occupies 10–205; that stretch reads KTHANIGTIG…AVDEYIPTPE (196 aa). The interval 19 to 26 is G1; sequence GHVDHGKT. 19–26 contacts GTP; the sequence is GHVDHGKT. T26 lines the Mg(2+) pocket. Residues 61–65 are G2; sequence GITIS. Residues 82–85 form a G3 region; it reads DCPG. GTP is bound by residues 82-86 and 137-140; these read DCPGH and NKCD. Positions 137–140 are G4; sequence NKCD. The tract at residues 175–177 is G5; it reads SAL.

This sequence belongs to the TRAFAC class translation factor GTPase superfamily. Classic translation factor GTPase family. EF-Tu/EF-1A subfamily. As to quaternary structure, monomer.

It is found in the cytoplasm. It carries out the reaction GTP + H2O = GDP + phosphate + H(+). Functionally, GTP hydrolase that promotes the GTP-dependent binding of aminoacyl-tRNA to the A-site of ribosomes during protein biosynthesis. The polypeptide is Elongation factor Tu (Shouchella clausii (strain KSM-K16) (Alkalihalobacillus clausii)).